Here is a 513-residue protein sequence, read N- to C-terminus: UDP-N-acetylmuramyl-tripeptide synthetase (513 aa).

Residue S38 participates in UDP-N-acetyl-alpha-D-muramoyl-L-alanyl-D-glutamate binding. 115–121 (GTKGKTT) is an ATP binding site. UDP-N-acetyl-alpha-D-muramoyl-L-alanyl-D-glutamate-binding positions include 161–162 (TT), S188, and R196. Position 230 is an N6-carboxylysine (K230).

It belongs to the MurCDEF family. MurE subfamily. Post-translationally, carboxylation is probably crucial for Mg(2+) binding and, consequently, for the gamma-phosphate positioning of ATP.

It is found in the cytoplasm. It functions in the pathway cell wall biogenesis; peptidoglycan biosynthesis. Its function is as follows. Catalyzes the addition of an amino acid to the nucleotide precursor UDP-N-acetylmuramoyl-L-alanyl-D-glutamate (UMAG) in the biosynthesis of bacterial cell-wall peptidoglycan. The sequence is that of UDP-N-acetylmuramyl-tripeptide synthetase from Latilactobacillus sakei subsp. sakei (strain 23K) (Lactobacillus sakei subsp. sakei).